Consider the following 806-residue polypeptide: Mitogen-activated protein kinase 7 (806 aa).

The segment at 1–23 (MAEPLKEEDGEDGSGEPPGRVKA) is disordered. A2 carries the post-translational modification N-acetylalanine. The tract at residues 2–77 (AEPLKEEDGE…VVSSARRRLT (76 aa)) is required for cytoplasmic targeting. Residues 55 to 347 (YEIIETIGNG…AAAALRHPFL (293 aa)) enclose the Protein kinase domain. Residues 61 to 69 (IGNGAYGVV) and K84 contribute to the ATP site. Positions 78–139 (GQQVAIKKIP…FRSVYVVLDL (62 aa)) are required for binding to MAP2K5. A necessary for oligomerization region spans residues 140 to 406 (MESDLHQIIH…QQIRFQPSLQ (267 aa)). The Proton acceptor role is filled by D182. The TXY motif lies at 219-221 (TEY). The segment at 407–806 (PVASEPVCPD…LSDLPDLQEP (400 aa)) is may not be required for kinase activity; required to stimulate MEF2C activity. Disordered stretches follow at residues 424–475 (APSG…SDNT) and 488–727 (RSRL…PKGS). The segment covering 433–443 (SPPPALPPCSG) has biased composition (pro residues). Composition is skewed to basic and acidic residues over residues 502-519 (PEPRKPVTAQERQREREE), 527-544 (RAKEREKRRQERERKERG), and 563-573 (DNDRSLLERWT). A Nuclear localization signal motif is present at residues 505–539 (RKPVTAQERQREREEKRRRRQERAKEREKRRQERE). Pro residues-rich tracts occupy residues 578–592 (PPVPAPAPAPAPTPK) and 627–643 (VCPPPGPVPQPAGPVPA). Polar residues predominate over residues 647–660 (TAPSTSLLASQSLV). Residues 678-689 (PSGPPPPDPGLT) are compositionally biased toward pro residues. Over residues 693–710 (STSESPDVNLVTQQLSKS) the composition is skewed to polar residues. Phosphoserine is present on S710. T723 carries the post-translational modification Phosphothreonine.

The protein belongs to the protein kinase superfamily. CMGC Ser/Thr protein kinase family. MAP kinase subfamily. As to quaternary structure, interacts with MAP2K5. Forms oligomers. Interacts with MEF2A, MEF2C and MEF2D; the interaction phosphorylates the MEF2s and enhances transcriptional activity of MEF2A, MEF2C but not MEF2D. Interacts with SGK1. Interacts with PML. Interacts (via N-terminal half) with HSP90AB1-CDC37 chaperone complex in resting cells; the interaction is MAP2K5-independent and prevents MAPK7 from ubiquitination and proteasomal degradation. Interacts with STUB1/CHIP; the interaction is enhanced in the presence of IGF1 or MAP2K5 and promotes STUB1/CHIP E3 ligase activity. It depends on Mg(2+) as a cofactor. Dually phosphorylated on Thr-219 and Tyr-221, which activates the enzyme.

It localises to the cytoplasm. The protein resides in the nucleus. The protein localises to the PML body. It catalyses the reaction L-seryl-[protein] + ATP = O-phospho-L-seryl-[protein] + ADP + H(+). It carries out the reaction L-threonyl-[protein] + ATP = O-phospho-L-threonyl-[protein] + ADP + H(+). With respect to regulation, activated by tyrosine and threonine phosphorylation. Activated in response to hyperosmolarity, hydrogen peroxide, and epidermal growth factor (EGF). Functionally, plays a role in various cellular processes such as proliferation, differentiation and cell survival. The upstream activator of MAPK7 is the MAPK kinase MAP2K5. Upon activation, it translocates to the nucleus and phosphorylates various downstream targets including MEF2C. EGF activates MAPK7 through a Ras-independent and MAP2K5-dependent pathway. As part of the MAPK/ERK signaling pathway, acts as a negative regulator of apoptosis in cardiomyocytes via interaction with STUB1/CHIP and promotion of STUB1-mediated ubiquitination and degradation of ICER-type isoforms of CREM. May have a role in muscle cell differentiation. May be important for endothelial function and maintenance of blood vessel integrity. MAP2K5 and MAPK7 interact specifically with one another and not with MEK1/ERK1 or MEK2/ERK2 pathways. Phosphorylates SGK1 at Ser-78 and this is required for growth factor-induced cell cycle progression. Involved in the regulation of p53/TP53 by disrupting the PML-MDM2 interaction. The polypeptide is Mitogen-activated protein kinase 7 (Mapk7) (Rattus norvegicus (Rat)).